The sequence spans 402 residues: 1-deoxy-D-xylulose 5-phosphate reductoisomerase (402 aa).

Positions 21, 22, 23, 24, 47, 50, and 127 each coordinate NADPH. Lys-128 is a binding site for 1-deoxy-D-xylulose 5-phosphate. Glu-129 contacts NADPH. Asp-151 is a Mn(2+) binding site. 4 residues coordinate 1-deoxy-D-xylulose 5-phosphate: Ser-152, Glu-153, Ser-177, and His-200. Glu-153 is a Mn(2+) binding site. Gly-206 serves as a coordination point for NADPH. 1-deoxy-D-xylulose 5-phosphate-binding residues include Ser-213, Asn-218, Lys-219, and Glu-222. A Mn(2+)-binding site is contributed by Glu-222.

This sequence belongs to the DXR family. Requires Mg(2+) as cofactor. It depends on Mn(2+) as a cofactor.

It catalyses the reaction 2-C-methyl-D-erythritol 4-phosphate + NADP(+) = 1-deoxy-D-xylulose 5-phosphate + NADPH + H(+). The protein operates within isoprenoid biosynthesis; isopentenyl diphosphate biosynthesis via DXP pathway; isopentenyl diphosphate from 1-deoxy-D-xylulose 5-phosphate: step 1/6. Catalyzes the NADPH-dependent rearrangement and reduction of 1-deoxy-D-xylulose-5-phosphate (DXP) to 2-C-methyl-D-erythritol 4-phosphate (MEP). The chain is 1-deoxy-D-xylulose 5-phosphate reductoisomerase from Mycobacterium marinum (strain ATCC BAA-535 / M).